A 561-amino-acid chain; its full sequence is Dihydroxy-acid dehydratase (561 aa).

Cys51 lines the [2Fe-2S] cluster pocket. Asp83 lines the Mg(2+) pocket. Cys124 is a binding site for [2Fe-2S] cluster. Residues Asp125 and Lys126 each coordinate Mg(2+). Position 126 is an N6-carboxylysine (Lys126). Cys196 contacts [2Fe-2S] cluster. Mg(2+) is bound at residue Glu448. Catalysis depends on Ser473, which acts as the Proton acceptor.

Belongs to the IlvD/Edd family. As to quaternary structure, homodimer. [2Fe-2S] cluster is required as a cofactor. The cofactor is Mg(2+).

It carries out the reaction (2R)-2,3-dihydroxy-3-methylbutanoate = 3-methyl-2-oxobutanoate + H2O. It catalyses the reaction (2R,3R)-2,3-dihydroxy-3-methylpentanoate = (S)-3-methyl-2-oxopentanoate + H2O. Its pathway is amino-acid biosynthesis; L-isoleucine biosynthesis; L-isoleucine from 2-oxobutanoate: step 3/4. The protein operates within amino-acid biosynthesis; L-valine biosynthesis; L-valine from pyruvate: step 3/4. Its function is as follows. Functions in the biosynthesis of branched-chain amino acids. Catalyzes the dehydration of (2R,3R)-2,3-dihydroxy-3-methylpentanoate (2,3-dihydroxy-3-methylvalerate) into 2-oxo-3-methylpentanoate (2-oxo-3-methylvalerate) and of (2R)-2,3-dihydroxy-3-methylbutanoate (2,3-dihydroxyisovalerate) into 2-oxo-3-methylbutanoate (2-oxoisovalerate), the penultimate precursor to L-isoleucine and L-valine, respectively. The polypeptide is Dihydroxy-acid dehydratase (Sulfolobus acidocaldarius (strain ATCC 33909 / DSM 639 / JCM 8929 / NBRC 15157 / NCIMB 11770)).